Consider the following 139-residue polypeptide: Holo-[acyl-carrier-protein] synthase (139 aa).

Positions 8 and 57 each coordinate Mg(2+).

It belongs to the P-Pant transferase superfamily. AcpS family. Mg(2+) is required as a cofactor.

The protein resides in the cytoplasm. The enzyme catalyses apo-[ACP] + CoA = holo-[ACP] + adenosine 3',5'-bisphosphate + H(+). Functionally, transfers the 4'-phosphopantetheine moiety from coenzyme A to a Ser of acyl-carrier-protein. In Rhizobium meliloti (strain 1021) (Ensifer meliloti), this protein is Holo-[acyl-carrier-protein] synthase.